The following is a 126-amino-acid chain: Type II methyltransferase M.HgiGI (126 aa).

The SAM-dependent MTase C5-type domain maps to 1 to 126 (MKTIDLFAGC…ARLSKIHQQA (126 aa)). Residue Cys-75 is part of the active site.

This sequence belongs to the class I-like SAM-binding methyltransferase superfamily. C5-methyltransferase family.

It carries out the reaction a 2'-deoxycytidine in DNA + S-adenosyl-L-methionine = a 5-methyl-2'-deoxycytidine in DNA + S-adenosyl-L-homocysteine + H(+). Functionally, a methylase, recognizes the double-stranded sequence 5'-GRCGYC-3', methylates C-? on both strands, and protects the DNA from cleavage by the HgiEI endonuclease. The protein is Type II methyltransferase M.HgiGI of Herpetosiphon aurantiacus (Herpetosiphon giganteus).